An 874-amino-acid polypeptide reads, in one-letter code: Dynein regulatory complex subunit 7 (874 aa).

Coiled-coil stretches lie at residues 1–67 (MEVL…SAEL) and 257–297 (RFEQ…DALH). Residues 386-400 (TEEDDSGINDEDDVE) show a composition bias toward acidic residues. The disordered stretch occupies residues 386–410 (TEEDDSGINDEDDVENLGKEDEDKS). Residues 401-410 (NLGKEDEDKS) show a composition bias toward basic and acidic residues. 2 coiled-coil regions span residues 688 to 711 (QVWE…AAHT) and 781 to 807 (KQRL…KKQQ).

Belongs to the DRC7 family. As to quaternary structure, component of the nexin-dynein regulatory complex (N-DRC). Interacts with TCTE1/DRC5. Interacts with DRC3 and GAS8/DRC4.

The protein resides in the cell projection. Its subcellular location is the cilium. The protein localises to the flagellum. It is found in the cytoplasm. It localises to the cytoskeleton. The protein resides in the cilium axoneme. Its subcellular location is the flagellum axoneme. Component of the nexin-dynein regulatory complex (N-DRC) a key regulator of ciliary/flagellar motility which maintains the alignment and integrity of the distal axoneme and regulates microtubule sliding in motile axonemes. Involved in the regulation of flagellar motility. Essential for male fertility, sperm head morphogenesis and sperm flagellum formation. This Homo sapiens (Human) protein is Dynein regulatory complex subunit 7 (DRC7).